The primary structure comprises 344 residues: Tryptophan--tRNA ligase (344 aa).

Residues 20 to 22 and 28 to 29 each bind ATP; these read QPS and GN. The short motif at 21 to 29 is the 'HIGH' region element; it reads PSGALHLGN. L-tryptophan is bound at residue Asp144. ATP-binding positions include 156–158, Val197, and 206–210; these read GED and KMSKS. The 'KMSKS' region motif lies at 206 to 210; that stretch reads KMSKS.

This sequence belongs to the class-I aminoacyl-tRNA synthetase family. As to quaternary structure, homodimer.

The protein localises to the cytoplasm. The catalysed reaction is tRNA(Trp) + L-tryptophan + ATP = L-tryptophyl-tRNA(Trp) + AMP + diphosphate + H(+). Its function is as follows. Catalyzes the attachment of tryptophan to tRNA(Trp). This Caulobacter vibrioides (strain ATCC 19089 / CIP 103742 / CB 15) (Caulobacter crescentus) protein is Tryptophan--tRNA ligase.